A 107-amino-acid polypeptide reads, in one-letter code: Glutaredoxin-1 (107 aa).

Alanine 2 bears the N-acetylalanine mark. Residues 3–106 (QEFVNCKIQS…ARLKQIGALQ (104 aa)) enclose the Glutaredoxin domain. Lysine 9 carries the post-translational modification N6-succinyllysine. Cystine bridges form between cysteine 23–cysteine 26 and cysteine 79–cysteine 83.

Belongs to the glutaredoxin family.

Its subcellular location is the cytoplasm. Has a glutathione-disulfide oxidoreductase activity in the presence of NADPH and glutathione reductase. Reduces low molecular weight disulfides and proteins. This is Glutaredoxin-1 (Glrx) from Rattus norvegicus (Rat).